The following is a 484-amino-acid chain: Cobyric acid synthase (484 aa).

A GATase cobBQ-type domain is found at 251 to 438 (ALKIAVPMLP…LHGLFGSDAY (188 aa)). Cysteine 333 functions as the Nucleophile in the catalytic mechanism. The active site involves histidine 430.

Belongs to the CobB/CobQ family. CobQ subfamily.

It participates in cofactor biosynthesis; adenosylcobalamin biosynthesis. Its function is as follows. Catalyzes amidations at positions B, D, E, and G on adenosylcobyrinic A,C-diamide. NH(2) groups are provided by glutamine, and one molecule of ATP is hydrogenolyzed for each amidation. The polypeptide is Cobyric acid synthase (Rhizobium etli (strain ATCC 51251 / DSM 11541 / JCM 21823 / NBRC 15573 / CFN 42)).